We begin with the raw amino-acid sequence, 213 residues long: Achelase-1 (213 aa).

One can recognise a Peptidase S1 domain in the interval 1 to 213; sequence IVGGSVTTIG…RYTSWIQSNA (213 aa). Residues cysteine 26 and cysteine 42 are joined by a disulfide bond. Catalysis depends on charge relay system residues histidine 41 and aspartate 86. Cysteine 155 and cysteine 172 are joined by a disulfide. The active-site Charge relay system is serine 188.

It belongs to the peptidase S1 family. As to expression, hemolymph and saliva of the larval form (caterpillar).

The protein localises to the secreted. Its subcellular location is the extracellular space. Sensitive to serine proteinase inhibitors and thiol proteinase inhibitors. Its function is as follows. Fibrinolytic activity; shows preferential cleavage of Arg-Gly bonds in all three fibrinogen chains. Contact with the caterpillars causes severe bleeding, due the anticoagulant effect of the protein. The sequence is that of Achelase-1 from Lonomia achelous (Giant silkworm moth).